The chain runs to 172 residues: uncharacterized protein (172 aa).

This is an uncharacterized protein from Bacillus subtilis (strain 168).